The chain runs to 245 residues: tRNA pseudouridine synthase A (245 aa).

Asp-52 functions as the Nucleophile in the catalytic mechanism. Substrate is bound at residue Tyr-112.

Belongs to the tRNA pseudouridine synthase TruA family. In terms of assembly, homodimer.

It catalyses the reaction uridine(38/39/40) in tRNA = pseudouridine(38/39/40) in tRNA. Functionally, formation of pseudouridine at positions 38, 39 and 40 in the anticodon stem and loop of transfer RNAs. In Dictyoglomus turgidum (strain DSM 6724 / Z-1310), this protein is tRNA pseudouridine synthase A.